Here is a 424-residue protein sequence, read N- to C-terminus: Serpin E3 (424 aa).

Residues 1–20 (MPPFLITLFLFHSCCLRANG) form the signal peptide. Asparagine 46 carries N-linked (GlcNAc...) asparagine glycosylation. Residues 143-174 (DLSEPNSTAIQTSEGASRETAGGGPSEGPGGW) form a disordered region. Residues 146 to 157 (EPNSTAIQTSEG) show a composition bias toward polar residues. Gly residues predominate over residues 163-173 (AGGGPSEGPGG).

It belongs to the serpin family.

It localises to the secreted. Its function is as follows. Probable serine protease inhibitor. The chain is Serpin E3 (SERPINE3) from Homo sapiens (Human).